A 257-amino-acid polypeptide reads, in one-letter code: Nickel import system ATP-binding protein NikD (257 aa).

The ABC transporter domain occupies 4-245 (IDIQNLTIKN…HLHPYTEQLI (242 aa)). 37–44 (GESGAGKS) is an ATP binding site.

The protein belongs to the ABC transporter superfamily. As to quaternary structure, the complex is composed of two ATP-binding proteins (NikD and NikE), two transmembrane proteins (NikB and NikC) and a solute-binding protein (NikA).

It is found in the cell membrane. The catalysed reaction is Ni(2+)(out) + ATP + H2O = Ni(2+)(in) + ADP + phosphate + H(+). Functionally, part of the ABC transporter complex NikABCDE (Opp2) involved in nickel import. Probably responsible for energy coupling to the transport system. The protein is Nickel import system ATP-binding protein NikD of Staphylococcus aureus (strain bovine RF122 / ET3-1).